The following is a 1029-amino-acid chain: Sodium/potassium-transporting ATPase subunit alpha-4 (1029 aa).

Residues 1-37 (MGLWGKKGTVAPHDQSPRRRPKKGLIKKKMVKREKQK) are disordered. Residues 1-95 (MGLWGKKGTV…NTVTPPPTTP (95 aa)) are Cytoplasmic-facing. The span at 18-36 (RRRPKKGLIKKKMVKREKQ) shows a compositional bias: basic residues. The tract at residues 90-92 (PPP) is interaction with phosphoinositide-3 kinase. Residues 96–116 (EWVKFCKQLFGGFSLLLWTGA) form a helical membrane-spanning segment. Over 117–139 (ILCFVAYSIQIYFNEEPTKDNLY) the chain is Extracellular. Residues 140-160 (LSIVLSVVVIVTGCFSYYQEA) traverse the membrane as a helical segment. Residues 161 to 296 (KSSKIMESFK…VGQTPIAAEI (136 aa)) are Cytoplasmic-facing. A compositionally biased stretch (polar residues) spans 223–237 (NSSLTGESEPQSRSP). Residues 223-242 (NSSLTGESEPQSRSPDFTHE) are disordered. The chain crosses the membrane as a helical span at residues 297–316 (EHFIHLITVVAVFLGVTFFA). Topologically, residues 317-328 (LSLLLGYGWLEA) are extracellular. A helical membrane pass occupies residues 329–346 (IIFLIGIIVANVPEGLLA). The Cytoplasmic portion of the chain corresponds to 347–778 (TVTVCLTLTA…EEGRLIFDNL (432 aa)). Asp384 serves as the catalytic 4-aspartylphosphate intermediate. Residues Asp723 and Asp727 each coordinate Mg(2+). Residues 779–798 (KKSIMYTLTSNIPEITPFLM) traverse the membrane as a helical segment. The Extracellular portion of the chain corresponds to 799–808 (FIILGIPLPL). A helical membrane pass occupies residues 809–829 (GTITILCIDLGTDMVPAISLA). At 830 to 849 (YESAESDIMKRLPRNPKTDN) the chain is on the cytoplasmic side. Residues 850–872 (LVNHRLIGMAYGQIGMIQALAGF) form a helical membrane-spanning segment. The Extracellular segment spans residues 873-924 (FTYFVILAENGFRPVDLLGIRLHWEDKYLNDLEDSYGQQWTYEQRKVVEFTC). A helical transmembrane segment spans residues 925-944 (QTAFFVTIVVVQWADLIISK). At 945 to 957 (TRRNSLFQQGMRN) the chain is on the cytoplasmic side. Ser949 carries the phosphoserine; by PKA modification. A helical membrane pass occupies residues 958-976 (KVLIFGILEETLLAAFLSY). At 977–991 (TPGMDVALRMYPLKI) the chain is on the extracellular side. A helical membrane pass occupies residues 992–1012 (TWWLCAIPYSILIFVYDEIRK). The Cytoplasmic segment spans residues 1013–1029 (LLIRQHPDGWVERETYY).

It belongs to the cation transport ATPase (P-type) (TC 3.A.3) family. Type IIC subfamily. The sodium/potassium-transporting ATPase is composed of a catalytic alpha subunit, an auxiliary non-catalytic beta subunit and an additional regulatory subunit. As to expression, specifically expressed in testis. Found in very low levels in skeletal muscle. Expressed in mature sperm (at protein level).

The protein localises to the cell membrane. The catalysed reaction is K(+)(out) + Na(+)(in) + ATP + H2O = K(+)(in) + Na(+)(out) + ADP + phosphate + H(+). Specifically inhibited by an endogenous cardiac glycoside, ouabain. This is the catalytic component of the active enzyme, which catalyzes the hydrolysis of ATP coupled with the exchange of sodium and potassium ions across the plasma membrane. This action creates the electrochemical gradient of sodium and potassium ions, providing the energy for active transport of various nutrients. Plays a role in sperm motility. The chain is Sodium/potassium-transporting ATPase subunit alpha-4 from Homo sapiens (Human).